The following is a 237-amino-acid chain: LexA repressor (237 aa).

Residues 26–46 constitute a DNA-binding region (H-T-H motif); it reads FDEMKEALDLRSKSGIHRLIT. The interval 84-110 is disordered; the sequence is GFSPSVIEGGAQPKPSSRDLAPARSSG. Active-site for autocatalytic cleavage activity residues include serine 158 and lysine 196.

This sequence belongs to the peptidase S24 family. Homodimer.

It catalyses the reaction Hydrolysis of Ala-|-Gly bond in repressor LexA.. Its function is as follows. Represses a number of genes involved in the response to DNA damage (SOS response), including recA and lexA. In the presence of single-stranded DNA, RecA interacts with LexA causing an autocatalytic cleavage which disrupts the DNA-binding part of LexA, leading to derepression of the SOS regulon and eventually DNA repair. In Parvibaculum lavamentivorans (strain DS-1 / DSM 13023 / NCIMB 13966), this protein is LexA repressor.